Consider the following 332-residue polypeptide: Large ribosomal subunit protein mL44 (332 aa).

The N-terminal 30 residues, 1 to 30 (MASGLTRLLLRGPRCLLATAGLTLIPPVRG), are a transit peptide targeting the mitochondrion. Residues 86–228 (DLLKTAFVNS…LITQMTGKEL (143 aa)) form the RNase III domain. A DRBM domain is found at 236–306 (NPMGLLVQEL…ARVALRKLYG (71 aa)).

It belongs to the ribonuclease III family. Mitochondrion-specific ribosomal protein mL44 subfamily. As to quaternary structure, component of the mitochondrial ribosome large subunit (39S) which comprises a 16S rRNA and about 50 distinct proteins.

Its subcellular location is the mitochondrion. In terms of biological role, component of the 39S subunit of mitochondrial ribosome. May have a function in the assembly/stability of nascent mitochondrial polypeptides exiting the ribosome. This chain is Large ribosomal subunit protein mL44 (MRPL44), found in Bos taurus (Bovine).